Here is a 1345-residue protein sequence, read N- to C-terminus: DNA-directed RNA polymerase subunit beta (1345 aa).

The protein belongs to the RNA polymerase beta chain family. The RNAP catalytic core consists of 2 alpha, 1 beta, 1 beta' and 1 omega subunit. When a sigma factor is associated with the core the holoenzyme is formed, which can initiate transcription.

The enzyme catalyses RNA(n) + a ribonucleoside 5'-triphosphate = RNA(n+1) + diphosphate. Its function is as follows. DNA-dependent RNA polymerase catalyzes the transcription of DNA into RNA using the four ribonucleoside triphosphates as substrates. The sequence is that of DNA-directed RNA polymerase subunit beta from Shewanella sp. (strain MR-4).